Here is a 439-residue protein sequence, read N- to C-terminus: Xaa-Pro dipeptidase (439 aa).

5 residues coordinate Mn(2+): Asp-244, Asp-255, His-335, Glu-380, and Glu-419.

It belongs to the peptidase M24B family. Bacterial-type prolidase subfamily. The cofactor is Mn(2+).

It carries out the reaction Xaa-L-Pro dipeptide + H2O = an L-alpha-amino acid + L-proline. Splits dipeptides with a prolyl residue in the C-terminal position. This chain is Xaa-Pro dipeptidase, found in Shewanella sediminis (strain HAW-EB3).